A 101-amino-acid polypeptide reads, in one-letter code: MITLGHMLALGAVLFAISLAGIFLNRKNVIVLLMSIELMLLSVNVNFVAFSRQLGDPSGQLFVFFILTVAAAEAAIGLAILVTLFRTRRTINVGEVDSLKG.

A run of 3 helical transmembrane segments spans residues 4 to 24, 30 to 50, and 62 to 82; these read LGHM…GIFL, IVLL…FVAF, and FVFF…AILV.

The protein belongs to the complex I subunit 4L family. NDH-1 is composed of 14 different subunits. Subunits NuoA, H, J, K, L, M, N constitute the membrane sector of the complex.

The protein localises to the cell inner membrane. It catalyses the reaction a quinone + NADH + 5 H(+)(in) = a quinol + NAD(+) + 4 H(+)(out). Functionally, NDH-1 shuttles electrons from NADH, via FMN and iron-sulfur (Fe-S) centers, to quinones in the respiratory chain. The immediate electron acceptor for the enzyme in this species is believed to be ubiquinone. Couples the redox reaction to proton translocation (for every two electrons transferred, four hydrogen ions are translocated across the cytoplasmic membrane), and thus conserves the redox energy in a proton gradient. The protein is NADH-quinone oxidoreductase subunit K of Stenotrophomonas maltophilia (strain R551-3).